Here is a 220-residue protein sequence, read N- to C-terminus: MQINKYIDHTILKADAPKSKVQQIIDEAKKYDFMSVCINPTWVNYASQELKDSDVKVCTVIGFPLGANTSELKAFEAKNAIENGADEIDMVINIGAAKSKDWDLVESDIADVNAVKGDKLLKVIIETSLLTDEEKIKACQIAKAVGADFVKTSTGFSTGGAAVHDVKLMRQTVGPDMGVKASGGVHNLEEAKAMIDAGATRLGVSAGVAIMEGLTSNDSY.

The active-site Proton donor/acceptor is the Asp89. Lys151 (schiff-base intermediate with acetaldehyde) is an active-site residue. The active-site Proton donor/acceptor is Lys180.

The protein belongs to the DeoC/FbaB aldolase family. DeoC type 1 subfamily.

The protein resides in the cytoplasm. It carries out the reaction 2-deoxy-D-ribose 5-phosphate = D-glyceraldehyde 3-phosphate + acetaldehyde. The protein operates within carbohydrate degradation; 2-deoxy-D-ribose 1-phosphate degradation; D-glyceraldehyde 3-phosphate and acetaldehyde from 2-deoxy-alpha-D-ribose 1-phosphate: step 2/2. Its function is as follows. Catalyzes a reversible aldol reaction between acetaldehyde and D-glyceraldehyde 3-phosphate to generate 2-deoxy-D-ribose 5-phosphate. The chain is Deoxyribose-phosphate aldolase from Lactococcus lactis subsp. cremoris (strain SK11).